A 245-amino-acid polypeptide reads, in one-letter code: Probable 2-phosphosulfolactate phosphatase (245 aa).

This sequence belongs to the ComB family. Mg(2+) is required as a cofactor.

The catalysed reaction is (2R)-O-phospho-3-sulfolactate + H2O = (2R)-3-sulfolactate + phosphate. The protein is Probable 2-phosphosulfolactate phosphatase of Synechococcus sp. (strain RCC307).